Reading from the N-terminus, the 754-residue chain is Ribonucleoside-diphosphate reductase subunit alpha (754 aa).

In terms of domain architecture, ATP-cone spans Ile4 to Gly93. Residues Thr206, Ser221–Cys222, Gly250, Asn435–Glu439, and Pro615–Ser619 each bind substrate. The cysteines at positions 222 and 457 are disulfide-linked. The active-site Proton acceptor is Asn435. Residue Cys437 is the Cysteine radical intermediate of the active site. Catalysis depends on Glu439, which acts as the Proton acceptor. The interval Gln621 to Ser641 is disordered.

This sequence belongs to the ribonucleoside diphosphate reductase large chain family. As to quaternary structure, heterodimer of a large and a small subunit.

The enzyme catalyses a 2'-deoxyribonucleoside 5'-diphosphate + [thioredoxin]-disulfide + H2O = a ribonucleoside 5'-diphosphate + [thioredoxin]-dithiol. With respect to regulation, under complex allosteric control mediated by deoxynucleoside triphosphates and ATP binding. The type of nucleotide bound at the specificity site determines substrate preference. It seems probable that ATP makes the enzyme reduce CDP and UDP, dGTP favors ADP reduction and dTTP favors GDP reduction. In terms of biological role, provides the precursors necessary for DNA synthesis. Catalyzes the biosynthesis of deoxyribonucleotides from the corresponding ribonucleotides. The polypeptide is Ribonucleoside-diphosphate reductase subunit alpha (NRDA) (Escherichia coli (Bacteriophage T4)).